A 312-amino-acid chain; its full sequence is Probable N-glycosylase/DNA lyase (312 aa).

Residues Met1–Pro22 are disordered. Residues Thr13 to Pro22 are compositionally biased toward polar residues. The active site involves Lys235.

This sequence belongs to the type-1 OGG1 family.

The enzyme catalyses 2'-deoxyribonucleotide-(2'-deoxyribose 5'-phosphate)-2'-deoxyribonucleotide-DNA = a 3'-end 2'-deoxyribonucleotide-(2,3-dehydro-2,3-deoxyribose 5'-phosphate)-DNA + a 5'-end 5'-phospho-2'-deoxyribonucleoside-DNA + H(+). Functionally, DNA repair enzyme that incises DNA at 8-oxoG residues. Excises 7,8-dihydro-8-oxoguanine and 2,6-diamino-4-hydroxy-5-N-methylformamidopyrimidine (FAPY) from damaged DNA. Has a beta-lyase activity that nicks DNA 3' to the lesion. The sequence is that of Probable N-glycosylase/DNA lyase from Methanothermobacter thermautotrophicus (strain ATCC 29096 / DSM 1053 / JCM 10044 / NBRC 100330 / Delta H) (Methanobacterium thermoautotrophicum).